Here is a 307-residue protein sequence, read N- to C-terminus: Transcription initiation factor IIB (307 aa).

A run of 2 repeats spans residues 123–206 (NELE…LREL) and 217–298 (DYVT…ELTQ).

It belongs to the TFIIB family.

In terms of biological role, stabilizes TBP binding to an archaeal box-A promoter. Also responsible for recruiting RNA polymerase II to the pre-initiation complex (DNA-TBP-TFIIB). The sequence is that of Transcription initiation factor IIB from Sulfolobus acidocaldarius (strain ATCC 33909 / DSM 639 / JCM 8929 / NBRC 15157 / NCIMB 11770).